An 809-amino-acid polypeptide reads, in one-letter code: Interleukin-4 receptor subunit alpha (809 aa).

An N-terminal signal peptide occupies residues 1–25; it reads MGCLCPGLTLPVSCLILVWAAGSGS. Topologically, residues 26–231 are extracellular; the sequence is VKVLRLTACF…NYYEQPLEQR (206 aa). Cys-34 and Cys-44 are oxidised to a cystine. 2 N-linked (GlcNAc...) asparagine glycosylation sites follow: Asn-53 and Asn-71. Cys-74 and Cys-86 form a disulfide bridge. 3 N-linked (GlcNAc...) asparagine glycosylation sites follow: Asn-112, Asn-128, and Asn-161. One can recognise a Fibronectin type-III domain in the interval 125–222; that stretch reads APQNLTVHAI…EWSPSTTWHN (98 aa). Position 163 is a phosphoserine (Ser-163). N-linked (GlcNAc...) asparagine glycans are attached at residues Asn-175 and Asn-208. Residues 211 to 215 carry the WSXWS motif motif; the sequence is WSEWS. A helical membrane pass occupies residues 232-255; it reads LPLGVSISCVVILAICLSCYFSII. Residues 256–809 are Cytoplasmic-facing; the sequence is KIKKEWWDQI…STGPTCTSAS (554 aa). The Box 1 motif motif lies at 261–269; it reads WWDQIPNPA. 2 disordered regions span residues 369 to 397 and 441 to 468; these read ESEE…QEGR and SAGP…TLTQ. Positions 447-468 are enriched in polar residues; it reads AASQGEEQPLNPESNPLATLTQ. Position 488 is a phosphotyrosine (Tyr-488). The tract at residues 514-536 is disordered; the sequence is LGQVDPSIPSAPQPSEPPTALQP. Tyr-566, Tyr-590, and Tyr-618 each carry phosphotyrosine. Residues 606–674 are disordered; it reads QSGVEASSGE…EPTVKGEDPR (69 aa). An ITIM motif motif is present at residues 695-700; that stretch reads IVYSAL.

The protein belongs to the type I cytokine receptor family. Type 4 subfamily. The functional IL4 receptor is formed by initial binding of IL4 to IL4R. Subsequent recruitment to the complex of the common gamma chain, in immune cells, creates a type I receptor and, in non-immune cells, of IL13RA1 forms a type II receptor. IL4R can also interact with the IL13/IL13RA1 complex to form a similar type II receptor. Interacts with PIK3C3. Interacts with the SH2-containing phosphatases, PTPN6/SHIP1, PTPN11/SHIP2 and INPP5D/SHIP. Interacts with JAK1 through a Box 1-containing region; inhibited by SOCS5. Interacts with SOCS5; inhibits IL4 signaling. Interacts with JAK3. Interacts with CLM1. Interacts with IL13RA2. In terms of processing, on IL4 binding, phosphorylated on tyrosine residues in the cytoplasmic domain.

It is found in the cell membrane. It localises to the secreted. Functionally, receptor for both interleukin 4 and interleukin 13. Couples to the JAK1/2/3-STAT6 pathway. The IL4 response is involved in promoting Th2 differentiation. The IL4/IL13 responses are involved in regulating IgE production and, chemokine and mucus production at sites of allergic inflammation. In certain cell types, can signal through activation of insulin receptor substrates, IRS1/IRS2. The protein is Interleukin-4 receptor subunit alpha (IL4R) of Equus caballus (Horse).